Reading from the N-terminus, the 64-residue chain is Small ribosomal subunit protein bS21 (64 aa).

Belongs to the bacterial ribosomal protein bS21 family.

In Sulfurihydrogenibium sp. (strain YO3AOP1), this protein is Small ribosomal subunit protein bS21.